The primary structure comprises 312 residues: DNA-directed RNA polymerase subunit alpha (312 aa).

The tract at residues 1-229 is alpha N-terminal domain (alpha-NTD); that stretch reads MLQYQIDRIE…ELFQPLATVT (229 aa). An alpha C-terminal domain (alpha-CTD) region spans residues 239–312; sequence EPTAEAQIPL…IQIPQSRTSA (74 aa).

The protein belongs to the RNA polymerase alpha chain family. In terms of assembly, in cyanobacteria the RNAP catalytic core is composed of 2 alpha, 1 beta, 1 beta', 1 gamma and 1 omega subunit. When a sigma factor is associated with the core the holoenzyme is formed, which can initiate transcription.

The catalysed reaction is RNA(n) + a ribonucleoside 5'-triphosphate = RNA(n+1) + diphosphate. In terms of biological role, DNA-dependent RNA polymerase catalyzes the transcription of DNA into RNA using the four ribonucleoside triphosphates as substrates. This is DNA-directed RNA polymerase subunit alpha from Synechococcus sp. (strain WH7803).